The following is a 145-amino-acid chain: [Ribosomal protein bS18]-alanine N-acetyltransferase (145 aa).

The N-acetyltransferase domain maps to 1 to 145 (MIETIVEQDF…ENAVIMALYL (145 aa)). An acetyl-CoA-binding site is contributed by 67–69 (LAV). The Proton acceptor role is filled by Glu-101. Asn-106 contributes to the acetyl-CoA binding site. Residue Tyr-113 is the Proton donor of the active site.

The protein belongs to the acetyltransferase family. RimI subfamily.

The protein resides in the cytoplasm. The catalysed reaction is N-terminal L-alanyl-[ribosomal protein bS18] + acetyl-CoA = N-terminal N(alpha)-acetyl-L-alanyl-[ribosomal protein bS18] + CoA + H(+). Functionally, acetylates the N-terminal alanine of ribosomal protein bS18. This Haemophilus ducreyi (strain 35000HP / ATCC 700724) protein is [Ribosomal protein bS18]-alanine N-acetyltransferase.